Consider the following 1168-residue polypeptide: Transcription-repair-coupling factor (1168 aa).

Residues 633–794 (DMQKSRPMDR…MLGVRDLSVI (162 aa)) enclose the Helicase ATP-binding domain. Residue 646–653 (GDVGYGKT) coordinates ATP. Positions 747–750 (DEEQ) match the DEEQ box motif. One can recognise a Helicase C-terminal domain in the interval 808 to 969 (VLEQNMSFIK…GFKIAMRDLN (162 aa)).

The protein in the N-terminal section; belongs to the UvrB family. In the C-terminal section; belongs to the helicase family. RecG subfamily.

The protein resides in the cytoplasm. In terms of biological role, couples transcription and DNA repair by recognizing RNA polymerase (RNAP) stalled at DNA lesions. Mediates ATP-dependent release of RNAP and its truncated transcript from the DNA, and recruitment of nucleotide excision repair machinery to the damaged site. This is Transcription-repair-coupling factor from Staphylococcus aureus (strain bovine RF122 / ET3-1).